The chain runs to 184 residues: ATP synthase subunit delta (184 aa).

It belongs to the ATPase delta chain family. F-type ATPases have 2 components, F(1) - the catalytic core - and F(0) - the membrane proton channel. F(1) has five subunits: alpha(3), beta(3), gamma(1), delta(1), epsilon(1). CF(0) has four main subunits: a(1), b(1), b'(1) and c(10-14). The alpha and beta chains form an alternating ring which encloses part of the gamma chain. F(1) is attached to F(0) by a central stalk formed by the gamma and epsilon chains, while a peripheral stalk is formed by the delta, b and b' chains.

It is found in the cellular thylakoid membrane. Its function is as follows. F(1)F(0) ATP synthase produces ATP from ADP in the presence of a proton or sodium gradient. F-type ATPases consist of two structural domains, F(1) containing the extramembraneous catalytic core and F(0) containing the membrane proton channel, linked together by a central stalk and a peripheral stalk. During catalysis, ATP synthesis in the catalytic domain of F(1) is coupled via a rotary mechanism of the central stalk subunits to proton translocation. This protein is part of the stalk that links CF(0) to CF(1). It either transmits conformational changes from CF(0) to CF(1) or is implicated in proton conduction. This chain is ATP synthase subunit delta, found in Gloeothece citriformis (strain PCC 7424) (Cyanothece sp. (strain PCC 7424)).